We begin with the raw amino-acid sequence, 864 residues long: MHERYVPADVEAAAQSDWRAADAYRSKEDANRKKFYCVSMLPYPSGKLHMGHVRNYTINDVMYRYLRMNGYNTLMPMGWDAFGMPAENAAMANGVPPAQWTYENIAYMKKQMQSMGLAIDWSREVTTCKPDYYKWNQWLFLKMLEKGVAYKKTGTVNWDPVDQTVLANEQVIDGRGWRSGALVEKREIPMYYMRITQYADELLNDLDGLGWPERVKVMQHNWIGKSFGVNFGFPYELDGEKKLLRVFTTRADTIMGVTFCAIAAEHPLAARLARDKPALQAFIDECKRGGVAEADIATMEKKGVATGFSVSHPLTGEPVEVWIGNYVLMSYGEGAVMGVPAHDERDFAFAKKYGLPIRQVIAVEGETYSTDAWQEWYGDKTRAVCVNSGKYDGLAHDAAVDAIAAELKAGGLGDKQITYRLRDWGISRQRYWGTPIPIIHCPSCGDVPVPEQDLPVVLPEDLVPDGTGNPLAKSDAFLNCTCPKCGAAAKRETDTMDTFVDSAWYFSRYAAPDAQTMVDARTDYWMPMDQYIGGIEHAILHLLYSRFWAKVMRDLGLVAFGEPAKNLLTQGMVLNETFYREDAAGKKTWYNPADVTVSFDDKGRPVGAVLKSDGQPVELGGIEKMSKSKNNGVDPQMLIDHYGADTARLFTMFAAPPEQQLEWSGAGVDGASRFLRRVWAFGFANREALAVRAPFDAAQLAEADKTLRREIHGVLKQADFDYQRLQYNTVVSAAMKMLNAIEGAKGSTPAVLRETYGVLLRVLYPVVPHVTFELWKALGYADEFGPLLDAPWPKVDEAALEQAEIELVLQVNGKVRGALKVAKDASREAIEAAAVADEMFAKFAEGRPAKKIIVVPGRLVNVVV.

Positions 42-52 (PYPSGKLHMGH) match the 'HIGH' region motif. A 'KMSKS' region motif is present at residues 624-628 (KMSKS). ATP is bound at residue K627.

This sequence belongs to the class-I aminoacyl-tRNA synthetase family.

It is found in the cytoplasm. It carries out the reaction tRNA(Leu) + L-leucine + ATP = L-leucyl-tRNA(Leu) + AMP + diphosphate. The sequence is that of Leucine--tRNA ligase from Burkholderia pseudomallei (strain 1710b).